The chain runs to 113 residues: Iron-sulfur cluster insertion protein ErpA (113 aa).

3 residues coordinate iron-sulfur cluster: Cys-41, Cys-105, and Cys-107.

It belongs to the HesB/IscA family. Homodimer. Requires iron-sulfur cluster as cofactor.

Functionally, required for insertion of 4Fe-4S clusters for at least IspG. This chain is Iron-sulfur cluster insertion protein ErpA, found in Hydrogenovibrio crunogenus (strain DSM 25203 / XCL-2) (Thiomicrospira crunogena).